The chain runs to 381 residues: Lipid-A-disaccharide synthase (381 aa).

The protein belongs to the LpxB family.

The enzyme catalyses 2-N,3-O-bis[(3R)-3-hydroxytetradecanoyl]-alpha-D-glucosaminyl 1-phosphate + UDP-2-N,3-O-bis[(3R)-3-hydroxytetradecanoyl]-alpha-D-glucosamine = lipid A disaccharide (E. coli) + UDP + H(+). The catalysed reaction is a lipid X + a UDP-2-N,3-O-bis[(3R)-3-hydroxyacyl]-alpha-D-glucosamine = a lipid A disaccharide + UDP + H(+). It functions in the pathway glycolipid biosynthesis; lipid IV(A) biosynthesis; lipid IV(A) from (3R)-3-hydroxytetradecanoyl-[acyl-carrier-protein] and UDP-N-acetyl-alpha-D-glucosamine: step 5/6. In terms of biological role, condensation of UDP-2,3-diacylglucosamine and 2,3-diacylglucosamine-1-phosphate to form lipid A disaccharide, a precursor of lipid A, a phosphorylated glycolipid that anchors the lipopolysaccharide to the outer membrane of the cell. This Erwinia tasmaniensis (strain DSM 17950 / CFBP 7177 / CIP 109463 / NCPPB 4357 / Et1/99) protein is Lipid-A-disaccharide synthase.